The sequence spans 223 residues: Small ribosomal subunit protein uS3 (223 aa).

In terms of domain architecture, KH type-2 spans 39 to 107; the sequence is VREFLHKKLA…PVQINIEEVR (69 aa).

The protein belongs to the universal ribosomal protein uS3 family. Part of the 30S ribosomal subunit. Forms a tight complex with proteins S10 and S14.

Its function is as follows. Binds the lower part of the 30S subunit head. Binds mRNA in the 70S ribosome, positioning it for translation. In Francisella tularensis subsp. holarctica (strain FTNF002-00 / FTA), this protein is Small ribosomal subunit protein uS3.